The following is a 1161-amino-acid chain: Type IV pilus biogenesis factor PilY1 (1161 aa).

The first 30 residues, 1-30, serve as a signal peptide directing secretion; the sequence is MKSVLHQIGKTSLAAALSGAVLLSAQTTHA. Ca(2+)-binding residues include aspartate 598, aspartate 600, asparagine 602, and aspartate 606. The integrin-binding motif RGD stretch occupies residues 617-619; the sequence is RGD. Residues aspartate 849, asparagine 851, aspartate 853, valine 855, and aspartate 857 each contribute to the Ca(2+) site. The segment at 1136 to 1161 is disordered; that stretch reads SGECLTVNPGPNTRGRQNWRPIEGKN.

It belongs to the PilY1 family. Interacts (via C-terminus) with host integrins alpha-V/beta-3 (ITGAV/ITGB3) and alpha-V/beta-5 (ITGAV/ITGB5).

It localises to the fimbrium. The protein resides in the membrane. The protein localises to the cytoplasm. Its subcellular location is the cytosol. Involved in pilus assembly, twitching motility and adhesion to host cells. Primes type IV pili (T4P) assembly and is required for inclusion of minor pilins PilV, PilW and PilX to the surface pili. Stabilizes assembled pilus fibers likely by antagonizing retraction mediated by PilT. Calcium-binding and calcium release by PilY1 seem to be essential for twitching motility and for regulation of pilus retraction dynamics of PilT. This Pseudomonas aeruginosa (strain ATCC 15692 / DSM 22644 / CIP 104116 / JCM 14847 / LMG 12228 / 1C / PRS 101 / PAO1) protein is Type IV pilus biogenesis factor PilY1.